The primary structure comprises 284 residues: 2-dehydro-3-deoxyphosphooctonate aldolase (284 aa).

The protein belongs to the KdsA family.

The protein localises to the cytoplasm. The enzyme catalyses D-arabinose 5-phosphate + phosphoenolpyruvate + H2O = 3-deoxy-alpha-D-manno-2-octulosonate-8-phosphate + phosphate. Its pathway is carbohydrate biosynthesis; 3-deoxy-D-manno-octulosonate biosynthesis; 3-deoxy-D-manno-octulosonate from D-ribulose 5-phosphate: step 2/3. The protein operates within bacterial outer membrane biogenesis; lipopolysaccharide biosynthesis. In Synechococcus sp. (strain ATCC 27144 / PCC 6301 / SAUG 1402/1) (Anacystis nidulans), this protein is 2-dehydro-3-deoxyphosphooctonate aldolase.